A 1526-amino-acid polypeptide reads, in one-letter code: uncharacterized protein (1526 aa).

16 WD repeats span residues cysteine 334–serine 376, lysine 862–threonine 901, glycine 904–lysine 945, glycine 946–isoleucine 985, glycine 988–isoleucine 1027, glycine 1030–threonine 1069, glycine 1072–threonine 1111, glycine 1114–threonine 1153, glycine 1156–isoleucine 1195, glycine 1198–threonine 1237, glycine 1240–threonine 1279, glycine 1282–threonine 1321, glycine 1324–threonine 1363, glycine 1366–threonine 1405, glycine 1408–threonine 1447, and glycine 1450–lysine 1491. Residues methionine 823 to lysine 862 enclose the Pentapeptide repeat domain.

This is an uncharacterized protein from Nostoc sp. (strain PCC 7120 / SAG 25.82 / UTEX 2576).